Reading from the N-terminus, the 389-residue chain is tRNA (adenine(58)-N(1))-methyltransferase catalytic subunit TRM61 (389 aa).

S-adenosyl-L-methionine-binding positions include 112 to 114 (SGS), Glu-133, Arg-138, 160 to 161 (DV), and Asp-181. Disordered stretches follow at residues 278 to 313 (TETG…GQKI) and 364 to 389 (ERCP…RTEA). Positions 280–289 (TGVEEEESDE) are enriched in acidic residues. Residues 290 to 301 (RDAKRSKTESGH) show a composition bias toward basic and acidic residues. The segment covering 368–389 (ETSTEGAEASTEATEAPARTEA) has biased composition (low complexity).

This sequence belongs to the class I-like SAM-binding methyltransferase superfamily. TRM61 family. Heterotetramer; composed of two copies of TRM6 and two copies of TRM61.

It localises to the nucleus. The enzyme catalyses adenosine(58) in tRNA + S-adenosyl-L-methionine = N(1)-methyladenosine(58) in tRNA + S-adenosyl-L-homocysteine + H(+). Its function is as follows. Catalytic subunit of tRNA (adenine-N(1)-)-methyltransferase, which catalyzes the formation of N(1)-methyladenine at position 58 (m1A58) in initiator methionyl-tRNA. The polypeptide is tRNA (adenine(58)-N(1))-methyltransferase catalytic subunit TRM61 (TRM61) (Yarrowia lipolytica (strain CLIB 122 / E 150) (Yeast)).